A 310-amino-acid polypeptide reads, in one-letter code: Ribose-phosphate pyrophosphokinase (310 aa).

ATP contacts are provided by residues 33–35 (DGE) and 92–93 (RQ). Mg(2+) contacts are provided by His127 and Asp166. Lys189 is a catalytic residue. D-ribose 5-phosphate contacts are provided by residues Arg191, Asp215, and 219 to 223 (DTAGT).

Belongs to the ribose-phosphate pyrophosphokinase family. Class I subfamily. Homohexamer. The cofactor is Mg(2+).

The protein resides in the cytoplasm. It carries out the reaction D-ribose 5-phosphate + ATP = 5-phospho-alpha-D-ribose 1-diphosphate + AMP + H(+). It participates in metabolic intermediate biosynthesis; 5-phospho-alpha-D-ribose 1-diphosphate biosynthesis; 5-phospho-alpha-D-ribose 1-diphosphate from D-ribose 5-phosphate (route I): step 1/1. In terms of biological role, involved in the biosynthesis of the central metabolite phospho-alpha-D-ribosyl-1-pyrophosphate (PRPP) via the transfer of pyrophosphoryl group from ATP to 1-hydroxyl of ribose-5-phosphate (Rib-5-P). In Bordetella parapertussis (strain 12822 / ATCC BAA-587 / NCTC 13253), this protein is Ribose-phosphate pyrophosphokinase.